Reading from the N-terminus, the 521-residue chain is Ankyrin repeat domain-containing protein 34B (521 aa).

ANK repeat units lie at residues 9 to 38 (TESNSLIKAVYQSRLRLTRLLLEGGAYINE), 42 to 79 (RGETPLMIACKTKHVDHQSVSKVKMIKYLLENNADPNI), 83 to 113 (FGKTALMHACLENAGAEVVSLLLESGADPSL), and 117 to 146 (TGFSALVYAVNSEDKETLRILLNACKAKGK). The tract at residues 161–188 (QTTRQYLNVPPSPGIEGNNSPSPCTSPS) is disordered. Residues 177-188 (GNNSPSPCTSPS) show a composition bias toward polar residues.

The protein belongs to the ANKRD34 family.

It localises to the cytoplasm. The protein resides in the nucleus. The sequence is that of Ankyrin repeat domain-containing protein 34B (ankrd34b) from Xenopus laevis (African clawed frog).